We begin with the raw amino-acid sequence, 1534 residues long: Ribosome-binding protein 1 (1534 aa).

Residues methionine 1–glutamine 7 lie on the Lumenal side of the membrane. Residues threonine 8 to valine 28 traverse the membrane as a helical segment. At serine 29–valine 1534 the chain is on the cytoplasmic side. Disordered regions lie at residues glutamine 45 to asparagine 91 and proline 125 to alanine 152. The segment covering threonine 52–glutamate 63 has biased composition (basic residues). Over residues lysine 64 to proline 88 the composition is skewed to basic and acidic residues. Low complexity predominate over residues proline 125 to serine 135. Residue lysine 148 forms a Glycyl lysine isopeptide (Lys-Gly) (interchain with G-Cter in SUMO2) linkage. Phosphoserine occurs at positions 159 and 165. 3 disordered regions span residues alanine 173–leucine 780, lysine 968–leucine 987, and arginine 1021–asparagine 1082. Positions lysine 175–threonine 194 are enriched in low complexity. 54 consecutive repeat copies span residues alanine 197–glutamine 206, asparagine 207–proline 216, asparagine 217–leucine 226, asparagine 227–glutamine 236, asparagine 237–proline 246, asparagine 247–glutamine 256, asparagine 257–glutamine 266, asparagine 267–proline 276, asparagine 277–proline 286, asparagine 287–proline 296, asparagine 297–proline 306, asparagine 307–glutamine 316, asparagine 317–proline 326, asparagine 327–glutamine 336, asparagine 337–glutamine 346, asparagine 347–proline 356, asparagine 357–proline 366, asparagine 367–proline 376, asparagine 377–proline 386, asparagine 387–glutamine 396, asparagine 397–glutamine 406, asparagine 407–glutamine 416, asparagine 417–serine 426, serine 427–proline 436, asparagine 437–proline 446, asparagine 447–glutamine 456, asparagine 457–proline 466, asparagine 467–glutamine 476, asparagine 477–serine 486, asparagine 487–glutamine 496, asparagine 497–proline 506, asparagine 507–glutamine 516, asparagine 517–proline 526, asparagine 527–glutamine 536, asparagine 537–proline 546, asparagine 547–proline 556, asparagine 557–proline 566, asparagine 567–proline 576, asparagine 577–proline 586, asparagine 587–proline 596, asparagine 597–proline 606, asparagine 607–proline 616, asparagine 617–proline 626, asparagine 627–proline 636, asparagine 637–proline 646, asparagine 647–glutamine 656, asparagine 657–proline 666, asparagine 667–alanine 676, asparagine 677–alanine 686, glycine 687–proline 696, asparagine 697–proline 706, asparagine 707–proline 716, asparagine 717–alanine 726, and asparagine 727–proline 736. Residues alanine 197–proline 736 form a 54 X 10 AA tandem repeats of [NASG]-[QL]-[GS]-[KRT]-[KR]-[AVTSEG]-[ED]-[AGVLS]-[ATGSV]-[PQLSA] region. Phosphothreonine is present on threonine 275. Polar residues predominate over residues alanine 395–glutamine 428. Residues glycine 474–glycine 499 show a composition bias toward polar residues. Polar residues predominate over residues threonine 705 to glutamine 718. Residue serine 715 is modified to Phosphoserine. Serine 747 carries the phosphoserine modification. Lysine 752 is covalently cross-linked (Glycyl lysine isopeptide (Lys-Gly) (interchain with G-Cter in SUMO1)). The residue at position 1032 (serine 1032) is a Phosphoserine. Basic and acidic residues predominate over residues alanine 1059–alanine 1080. Lysine 1064 is modified (N6-acetyllysine). Phosphoserine is present on residues serine 1091 and serine 1110. 3 disordered regions span residues glutamate 1224–asparagine 1251, lysine 1391–lysine 1416, and glutamate 1509–valine 1534. The span at glutamate 1509–serine 1528 shows a compositional bias: basic and acidic residues.

Its subcellular location is the endoplasmic reticulum membrane. Its function is as follows. Acts as a ribosome receptor and mediates interaction between the ribosome and the endoplasmic reticulum membrane. The polypeptide is Ribosome-binding protein 1 (RRBP1) (Canis lupus familiaris (Dog)).